The primary structure comprises 1169 residues: MAEEEVAKLEKHLMLLRQEYVKLQKKLAETEKRCTLLAAQANKENSNESFISRLLAIVAGLYEQEQYSDLKIKVGDRHISAHKFVLAARSDSWSLANLSSTEEIDLSDANPEVTMTMLRWIYTDELEFREDDVFLTELMKLANRFQLQLLRERCEKGVMSLVNVRNCIRFYQTAEELNASTLMNYCAEIIASHWDDLRKEDFSSLSAQLLYKMIKSKTEYPLHKAIKVEREDVVFLYLIEMDSQLPGKLNETDHNGDLALDLALSRRLESIATTLVSHKADVDMVDKNGWSLLHKGIQRGDLFASTFLIKNGALVNAATAGAQETPLHLVALYSPKKYSADVMSEMAQIAEALLQAGANPNMQDSKGRTPLHLSIMARNDCVFSQLLQCKQLDLELKDHEGSTALWLAVQYITVSSDQSVNPFEDLPVVNGTSFDENSFAARLIQRGSNTDAPDVMTGNCLLQRAAGAGNEAAALFLATSGAHANHRNKWGETPLHTACRHGLANLTAELLQQGANPNLQTEEALPVPKESPVLMSSADSIYLQTPLHMAIAYNHPDVVSVILEQKANALHATNNLQIIPDFSLKDSRDQTVLGLALWTGMHTIAAQLLGSGASINDTMSDGQTLLHMAIQRQDSKSALFLLEHQADINVRTQDGETALQLAIKHQLPLVVDAICTRGADMSVPDEKGNPPLWLALASNLEDIASTLVRHGCDATCWGPGPSGCLQTLLHRAVDENNESTACFLIRSGCDVNSPRQPGTNGEGEEEARDGQTPLHLAASWGLEETVQCLLEFGANVNAQDAEGRTPVHVAISNQHSVIIQLLISHPNIELSVRDRQGLTPFACAMTYKNNKAAEAILKRESGAAEQVDNKGRNFLHVAVQNSDIESVLFLISVQANVNSRVQDASKLTPLHLAVQAGSEIIVRNLLLAGAKVNELTKHRQTALHLAAQQDLPTICSVLLENGVDFAAVDENGNNALHLAVMHGRLNNIRALLTECTVDAEAFNLRGQSPLHILGQYGKENAAAIFDLFLECMPEYPLDKPDAEGNTVLLLAYMKGNANLCRAIVRSGVRLGVNNNQGVNIFNYQVATKQLLFRLLDMLSKEPPWCDGSNCYECTAKFGVTTRKHHCRHCGRLLCHKCSTKEIPIIKFDLNKPVRVCNICFDVLTLGGVS.

Alanine 2 is modified (N-acetylalanine). Residues 68 to 130 enclose the BTB domain; that stretch reads SDLKIKVGDR…IYTDELEFRE (63 aa). 5 ANK repeats span residues 217 to 247, 255 to 284, 288 to 317, 322 to 362, and 366 to 396; these read KTEYPLHKAIKVEREDVVFLYLIEMDSQLPG, NGDLALDLALSRRLESIATTLVSHKADVDM, NGWSLLHKGIQRGDLFASTFLIKNGALVNA, AQET…NPNM, and KGRTPLHLSIMARNDCVFSQLLQCKQLDLEL. Serine 270 is modified (phosphoserine). The short motif at 421–423 is the NPF element; it reads NPF. ANK repeat units follow at residues 490–519, 542–572, 588–617, 621–650, 654–683, 687–716, 724–753, 769–798, 802–832, 836–865, 870–899, 905–934, 938–967, 971–1001, 1005–1037, and 1043–1072; these read WGETPLHTACRHGLANLTAELLQQGANPNL, YLQTPLHMAIAYNHPDVVSVILEQKANALHA, RDQTVLGLALWTGMHTIAAQLLGSGASIND, DGQTLLHMAIQRQDSKSALFLLEHQADINV, DGETALQLAIKHQLPLVVDAICTRGADMSV, KGNPPLWLALASNLEDIASTLVRHGCDATC, CLQTLLHRAVDENNESTACFLIRSGCDVNS, DGQTPLHLAASWGLEETVQCLLEFGANVNA, EGRTPVHVAISNQHSVIIQLLISHPNIELSV, QGLTPFACAMTYKNNKAAEAILKRESGAAE, KGRNFLHVAVQNSDIESVLFLISVQANVNS, SKLTPLHLAVQAGSEIIVRNLLLAGAKVNE, HRQTALHLAAQQDLPTICSVLLENGVDFAA, NGNNALHLAVMHGRLNNIRALLTECTVDAEA, RGQSPLHILGQYGKENAAAIFDLFLECMPEYPL, and EGNTVLLLAYMKGNANLCRAIVRSGVRLGV. Residues 650–759 are interaction with RHOD and RAB5A; it reads VRTQDGETAL…DVNSPRQPGT (110 aa). The FYVE-type zinc-finger motif lies at 1104 to 1164; sequence WCDGSNCYEC…VCNICFDVLT (61 aa). Zn(2+) is bound by residues cysteine 1110, cysteine 1113, cysteine 1126, cysteine 1129, cysteine 1134, cysteine 1137, cysteine 1156, and cysteine 1159.

Interacts with RAB5A (in GTP-bound form). Interacts with RHOD (independent of GTP-loaded status). Interacts with EHD1. Interacts with VPS26A; the interaction is independent of EHD1 and is indicative for an association with the cargo recognition subcomplex of the retromer complex. Expressed in kidney proximal tubule epithelial cells; at protein level.

The protein localises to the cytoplasm. It is found in the endosome membrane. Its subcellular location is the cytoplasmic vesicle. Functionally, proposed effector of Rab5. Binds to phosphatidylinositol 3-phosphate (PI(3)P). Involved in homotypic early endosome fusion and to a lesser extent in heterotypic fusion of chlathrin-coated vesicles with early endosomes. Required for correct endosomal localization. Involved in the internalization and trafficking of activated tyrosine kinase receptors such as PDGFRB. Regulates the subcellular localization of the retromer complex in a EHD1-dependent manner. Involved in endosome-to-Golgi transport and biosynthetic transport to late endosomes and lysosomes indicative for a regulation of retromer complex-mediated retrograde transport. Involved in macropinocytosis; the function is dependent on Rab5-GTP. The protein is Rabankyrin-5 (Ankfy1) of Mus musculus (Mouse).